Here is a 312-residue protein sequence, read N- to C-terminus: Non-structural protein 12A (312 aa).

The span at Met-1–Gly-23 shows a compositional bias: low complexity. Disordered regions lie at residues Met-1–Val-37, Phe-62–Asn-97, and Ser-112–Thr-159. The span at Val-63–Leu-73 shows a compositional bias: basic and acidic residues. Positions Lys-74 to Asn-97 are enriched in polar residues. A compositionally biased stretch (basic and acidic residues) spans Asp-122 to Gln-134. Residues Glu-135–Arg-154 are compositionally biased toward polar residues.

The protein belongs to the phytoreovirus non-structural protein Pns12A family.

It is found in the host cytoplasm. Constituent of viral factories. This Rice dwarf virus (isolate O) (RDV) protein is Non-structural protein 12A.